Consider the following 732-residue polypeptide: 1,4-alpha-glucan branching enzyme GlgB 1 (732 aa).

Asp-411 acts as the Nucleophile in catalysis. Catalysis depends on Glu-464, which acts as the Proton donor.

This sequence belongs to the glycosyl hydrolase 13 family. GlgB subfamily. As to quaternary structure, monomer.

The enzyme catalyses Transfers a segment of a (1-&gt;4)-alpha-D-glucan chain to a primary hydroxy group in a similar glucan chain.. The protein operates within glycan biosynthesis; glycogen biosynthesis. Catalyzes the formation of the alpha-1,6-glucosidic linkages in glycogen by scission of a 1,4-alpha-linked oligosaccharide from growing alpha-1,4-glucan chains and the subsequent attachment of the oligosaccharide to the alpha-1,6 position. This Xanthomonas oryzae pv. oryzae (strain KACC10331 / KXO85) protein is 1,4-alpha-glucan branching enzyme GlgB 1.